Consider the following 235-residue polypeptide: CD-NTase-associated protein 13 (235 aa).

The next 2 helical transmembrane spans lie at 14–34 (IVHH…LIWI) and 45–65 (IIFT…IVGL).

The protein in the C-terminal section; belongs to the bacterial STING family. In terms of assembly, homodimer.

It is found in the cell inner membrane. In terms of biological role, effector protein of a CBASS antivirus system. CBASS (cyclic oligonucleotide-based antiphage signaling system) provides immunity against bacteriophage. The CD-NTase protein synthesizes cyclic nucleotides in response to infection; these serve as specific second messenger signals. The signals activate a diverse range of effectors, leading to bacterial cell death and thus abortive phage infection. A type I-D(GG) CBASS system. Binds cyclic dinucleotides: binds c-di-GMP (synthesized by the cognate CdnE encoded upstream in the same operon), cyclic 3'3'-cyclic GMP-AMP (3'3'-cGAMP) but not cUMP-AMP. The effector protein for this CBASS system, its activity is stimulated by c-di-GMP and leads to cell death. The chain is CD-NTase-associated protein 13 from Flavobacteriaceae sp. genome_bin_11.